Consider the following 105-residue polypeptide: Phosphoribosyl-ATP pyrophosphatase (105 aa).

It belongs to the PRA-PH family.

The protein resides in the cytoplasm. It catalyses the reaction 1-(5-phospho-beta-D-ribosyl)-ATP + H2O = 1-(5-phospho-beta-D-ribosyl)-5'-AMP + diphosphate + H(+). Its pathway is amino-acid biosynthesis; L-histidine biosynthesis; L-histidine from 5-phospho-alpha-D-ribose 1-diphosphate: step 2/9. This Roseobacter denitrificans (strain ATCC 33942 / OCh 114) (Erythrobacter sp. (strain OCh 114)) protein is Phosphoribosyl-ATP pyrophosphatase.